Reading from the N-terminus, the 219-residue chain is Vacuolar protein sorting-associated protein 32 homolog 2 (219 aa).

Coiled-coil stretches lie at residues 10–41 (KQEANALQTLDKLNETLEMLEKKEKVLLKKAG) and 117–176 (TNID…QLLQ). Residues 168-219 (EELESQLLQPATTAPPLPSVPVPAGRQPARPVPQKRTAEEEELAALQAEMAL) form a disordered region.

Belongs to the SNF7 family. As to quaternary structure, component of the endosomal sorting required for transport complex III (ESCRT-III), composed at least of VPS2, VPS20, VPS24 and VPS32. Interacts with SKD1. Interacts with BRO1/ALIX.

The protein resides in the endosome. Its function is as follows. Component of the ESCRT-III complex, which is required for multivesicular bodies (MVBs) formation and sorting of endosomal cargo proteins into MVBs. The ESCRT-III complex is probably involved in the concentration of MVB cargo. The polypeptide is Vacuolar protein sorting-associated protein 32 homolog 2 (VPS32.2) (Arabidopsis thaliana (Mouse-ear cress)).